The chain runs to 1070 residues: DNA-directed RNA polymerase subunit beta (1070 aa).

The protein belongs to the RNA polymerase beta chain family. In terms of assembly, in plastids the minimal PEP RNA polymerase catalytic core is composed of four subunits: alpha, beta, beta', and beta''. When a (nuclear-encoded) sigma factor is associated with the core the holoenzyme is formed, which can initiate transcription.

It is found in the plastid. The protein resides in the chloroplast. It carries out the reaction RNA(n) + a ribonucleoside 5'-triphosphate = RNA(n+1) + diphosphate. DNA-dependent RNA polymerase catalyzes the transcription of DNA into RNA using the four ribonucleoside triphosphates as substrates. The polypeptide is DNA-directed RNA polymerase subunit beta (Solanum tuberosum (Potato)).